We begin with the raw amino-acid sequence, 256 residues long: MAVGKNKRLSKGKKGVKKRTVDPFTRKDEYSVKAPSTFQTRDVGKTLVNRTSGLKNANDSLKGRIFEVSLADLQNDEDHAFRKVKLRVDEIQGKNCLTNFHGLDFTTDKLRSLVRKWQSLIEANVTVKTTDDYLLRLFAIAFTKRRPNQIKKTTYARSSQIRAIRKKMTEIMQREAASCSLAQLTTKLIPEVIGREIEKATQGIYPLQNVHIRKVKLLKSPKFDLGALLNLHGESTTDDKGHKVEREFKEQVLESV.

The segment covering 1-18 (MAVGKNKRLSKGKKGVKK) has biased composition (basic residues). Residues 1 to 21 (MAVGKNKRLSKGKKGVKKRTV) form a disordered region. Ala-2 carries the post-translational modification N-acetylalanine; partial.

It belongs to the eukaryotic ribosomal protein eS1 family. Component of the small ribosomal subunit. Mature ribosomes consist of a small (40S) and a large (60S) subunit. The 40S subunit contains about 33 different proteins and 1 molecule of RNA (18S). The 60S subunit contains about 49 different proteins and 3 molecules of RNA (25S, 5.8S and 5S).

Its subcellular location is the cytoplasm. This chain is Small ribosomal subunit protein eS1 (rps1), found in Aspergillus niger (strain ATCC MYA-4892 / CBS 513.88 / FGSC A1513).